The sequence spans 438 residues: Aspartyl protease 25 (438 aa).

An N-terminal signal peptide occupies residues methionine 1–alanine 23. A Peptidase A1 domain is found at tyrosine 79–alanine 433. Aspartate 97 is a catalytic residue. A disulfide bridge connects residues cysteine 107 and cysteine 113. Residues asparagine 123, asparagine 193, and asparagine 282 are each glycosylated (N-linked (GlcNAc...) asparagine). The active site involves aspartate 313. Cysteine 352 and cysteine 394 are disulfide-bonded.

Belongs to the peptidase A1 family.

Functionally, anther-specific aspartic protease involved in tapetal programmed cell death (PCD). Directly regulated by the transcription factor EAT1/DTD in anthers during tapetum PCD and degeneration. The chain is Aspartyl protease 25 from Oryza sativa subsp. japonica (Rice).